A 380-amino-acid chain; its full sequence is Cytochrome b (380 aa).

The next 4 membrane-spanning stretches (helical) occupy residues 34-54, 78-99, 114-134, and 179-199; these read FGSL…LLAM, WLIR…YLHI, WNVG…GYVL, and FFAL…VHLT. 2 residues coordinate heme b: His-84 and His-98. Heme b contacts are provided by His-183 and His-197. Residue His-202 participates in a ubiquinone binding. Helical transmembrane passes span 227 to 247, 289 to 309, 321 to 341, and 348 to 368; these read IKDI…ALFS, LGGV…PLLH, LSQI…WIGS, and FIII…VLFP.

The protein belongs to the cytochrome b family. The cytochrome bc1 complex contains 11 subunits: 3 respiratory subunits (MT-CYB, CYC1 and UQCRFS1), 2 core proteins (UQCRC1 and UQCRC2) and 6 low-molecular weight proteins (UQCRH/QCR6, UQCRB/QCR7, UQCRQ/QCR8, UQCR10/QCR9, UQCR11/QCR10 and a cleavage product of UQCRFS1). This cytochrome bc1 complex then forms a dimer. Heme b is required as a cofactor.

The protein resides in the mitochondrion inner membrane. Component of the ubiquinol-cytochrome c reductase complex (complex III or cytochrome b-c1 complex) that is part of the mitochondrial respiratory chain. The b-c1 complex mediates electron transfer from ubiquinol to cytochrome c. Contributes to the generation of a proton gradient across the mitochondrial membrane that is then used for ATP synthesis. The protein is Cytochrome b (MT-CYB) of Vireo olivaceus (Red-eyed vireo).